A 70-amino-acid chain; its full sequence is UPF0352 protein PBPRA2586 (70 aa).

The protein belongs to the UPF0352 family.

The sequence is that of UPF0352 protein PBPRA2586 from Photobacterium profundum (strain SS9).